The primary structure comprises 322 residues: uncharacterized protein (322 aa).

It to M.jannaschii MJ0640 and MJ0799.

This is an uncharacterized protein from Synechocystis sp. (strain ATCC 27184 / PCC 6803 / Kazusa).